A 191-amino-acid chain; its full sequence is Crossover junction endodeoxyribonuclease RuvC (191 aa).

Catalysis depends on residues D7, E67, and D141. 3 residues coordinate Mg(2+): D7, E67, and D141.

It belongs to the RuvC family. In terms of assembly, homodimer which binds Holliday junction (HJ) DNA. The HJ becomes 2-fold symmetrical on binding to RuvC with unstacked arms; it has a different conformation from HJ DNA in complex with RuvA. In the full resolvosome a probable DNA-RuvA(4)-RuvB(12)-RuvC(2) complex forms which resolves the HJ. Mg(2+) serves as cofactor.

Its subcellular location is the cytoplasm. It catalyses the reaction Endonucleolytic cleavage at a junction such as a reciprocal single-stranded crossover between two homologous DNA duplexes (Holliday junction).. Its function is as follows. The RuvA-RuvB-RuvC complex processes Holliday junction (HJ) DNA during genetic recombination and DNA repair. Endonuclease that resolves HJ intermediates. Cleaves cruciform DNA by making single-stranded nicks across the HJ at symmetrical positions within the homologous arms, yielding a 5'-phosphate and a 3'-hydroxyl group; requires a central core of homology in the junction. The consensus cleavage sequence is 5'-(A/T)TT(C/G)-3'. Cleavage occurs on the 3'-side of the TT dinucleotide at the point of strand exchange. HJ branch migration catalyzed by RuvA-RuvB allows RuvC to scan DNA until it finds its consensus sequence, where it cleaves and resolves the cruciform DNA. The sequence is that of Crossover junction endodeoxyribonuclease RuvC from Myxococcus xanthus (strain DK1622).